Here is a 278-residue protein sequence, read N- to C-terminus: Serine/arginine-rich splicing factor SR34B (278 aa).

One can recognise an RRM 1 domain in the interval 7-82 (RTIYVGNLPG…HHLRVELAHG (76 aa)). Positions 81-91 (HGGRRSSHDAR) are enriched in basic and acidic residues. 2 disordered regions span residues 81–121 (HGGR…SEYR) and 192–263 (EYDS…RSLS). Positions 95–107 (SGRGRGGRGGGDG) are enriched in gly residues. Composition is skewed to basic and acidic residues over residues 108–120 (GGRE…RSEY) and 192–201 (EYDSRRDSRS). An RRM 2 domain is found at 120–195 (YRVVVSGLPS…EYVRVREYDS (76 aa)). Phosphoserine is present on residues serine 201, serine 203, serine 225, serine 231, serine 233, serine 242, serine 250, serine 259, and serine 263. Over residues 207-243 (SYSKSRSRGRSPSRSRSRSRSRSKSRSPKAKSLRRSP) the composition is skewed to basic residues.

It belongs to the splicing factor SR family. SR subfamily. As to quaternary structure, component of the spliceosome.

The protein localises to the nucleus speckle. It localises to the nucleus. The protein resides in the nucleoplasm. Probably involved in intron recognition and spliceosome assembly. In Arabidopsis thaliana (Mouse-ear cress), this protein is Serine/arginine-rich splicing factor SR34B (SR34B).